The sequence spans 102 residues: MVIGLSHYLTVSAILFTLGVFGIFLNRKNVIVILMSIELILLAVNINMVAFSSFLNDIVGQVFALFILTVAAAEAAIGLAILVVFYRNRGSIAVEDVNMMKG.

A run of 3 helical transmembrane segments spans residues 5-25 (LSHYLTVSAILFTLGVFGIFL), 31-51 (IVILMSIELILLAVNINMVAF), and 65-85 (LFILTVAAAEAAIGLAILVVF).

The protein belongs to the complex I subunit 4L family. In terms of assembly, NDH-1 is composed of 14 different subunits. Subunits NuoA, H, J, K, L, M, N constitute the membrane sector of the complex.

It localises to the cell inner membrane. It catalyses the reaction a quinone + NADH + 5 H(+)(in) = a quinol + NAD(+) + 4 H(+)(out). NDH-1 shuttles electrons from NADH, via FMN and iron-sulfur (Fe-S) centers, to quinones in the respiratory chain. The immediate electron acceptor for the enzyme in this species is believed to be ubiquinone. Couples the redox reaction to proton translocation (for every two electrons transferred, four hydrogen ions are translocated across the cytoplasmic membrane), and thus conserves the redox energy in a proton gradient. This is NADH-quinone oxidoreductase subunit K from Rhizobium johnstonii (strain DSM 114642 / LMG 32736 / 3841) (Rhizobium leguminosarum bv. viciae).